The chain runs to 78 residues: U-scoloptoxin(15)-Ssm2a (78 aa).

Residues 1–23 form the signal peptide; it reads MEKKIIFLCFFVSLLTLPEFISS. The tract at residues 34–37 is important for inhibition of KCNQ4; the sequence is PEKK. 2 disulfides stabilise this stretch: Cys44/Cys70 and Cys48/Cys72.

Belongs to the SLPTX(15) family. As to expression, expressed by the venom gland.

It is found in the secreted. This is U-scoloptoxin(15)-Ssm2a from Scolopendra mutilans (Chinese red-headed centipede).